Reading from the N-terminus, the 261-residue chain is MIVKTRAVVLREIKYRDQSKICTLFTSEFGKLTAILKGGRNPKSRLSGKFSAGNVLDIVLYKKNGRDIQLISDGSLLFSPLSAEPDMERFATMYRIIDLISQALEGEEKNLPLFSLLTGVLEILYSTEERFELLFIWFLLRMISTLGFEPSLDRCVYSGEPLSAAAETMMLRELSFVMNPGGVALPAAALRQISQQHSITMPAYRLLSELSSTPLSALDEVDAGKAETEFLCKLLQEYCRLHLDHTPRNRNLAVVAQMLSK.

Belongs to the RecO family.

Its function is as follows. Involved in DNA repair and RecF pathway recombination. In Chlorobium limicola (strain DSM 245 / NBRC 103803 / 6330), this protein is DNA repair protein RecO.